A 637-amino-acid chain; its full sequence is DNA gyrase subunit B (637 aa).

The Toprim domain occupies 422–536 (CEVYIVEGDS…AGYVYLAMPP (115 aa)). Mg(2+) contacts are provided by Glu428, Asp501, and Asp503.

It belongs to the type II topoisomerase GyrB family. As to quaternary structure, heterotetramer, composed of two GyrA and two GyrB chains. In the heterotetramer, GyrA contains the active site tyrosine that forms a transient covalent intermediate with DNA, while GyrB binds cofactors and catalyzes ATP hydrolysis. Requires Mg(2+) as cofactor. Mn(2+) serves as cofactor. The cofactor is Ca(2+).

It localises to the cytoplasm. The catalysed reaction is ATP-dependent breakage, passage and rejoining of double-stranded DNA.. Functionally, a type II topoisomerase that negatively supercoils closed circular double-stranded (ds) DNA in an ATP-dependent manner to modulate DNA topology and maintain chromosomes in an underwound state. Negative supercoiling favors strand separation, and DNA replication, transcription, recombination and repair, all of which involve strand separation. Also able to catalyze the interconversion of other topological isomers of dsDNA rings, including catenanes and knotted rings. Type II topoisomerases break and join 2 DNA strands simultaneously in an ATP-dependent manner. This Treponema pallidum (strain Nichols) protein is DNA gyrase subunit B.